Here is a 533-residue protein sequence, read N- to C-terminus: Peptide chain release factor 3 (533 aa).

Residues 9–284 enclose the tr-type G domain; sequence ARRRTFAIIS…ALCQLSPPPL (276 aa). Residues 18–25, 95–99, and 149–152 contribute to the GTP site; these read SHPDAGKT, DTPGH, and NKLD.

The protein belongs to the TRAFAC class translation factor GTPase superfamily. Classic translation factor GTPase family. PrfC subfamily.

The protein resides in the cytoplasm. Its function is as follows. Increases the formation of ribosomal termination complexes and stimulates activities of RF-1 and RF-2. It binds guanine nucleotides and has strong preference for UGA stop codons. It may interact directly with the ribosome. The stimulation of RF-1 and RF-2 is significantly reduced by GTP and GDP, but not by GMP. This is Peptide chain release factor 3 from Cupriavidus pinatubonensis (strain JMP 134 / LMG 1197) (Cupriavidus necator (strain JMP 134)).